The chain runs to 72 residues: MSKEEVLEFSGVVTELLPNAMFRVKLENDHEIIAHTAGRMRKNRIRVLAGDKIMVEMTPYDLTKGRITYRYK.

The 72-residue stretch at 1–72 (MSKEEVLEFS…TKGRITYRYK (72 aa)) folds into the S1-like domain.

It belongs to the IF-1 family. In terms of assembly, component of the 30S ribosomal translation pre-initiation complex which assembles on the 30S ribosome in the order IF-2 and IF-3, IF-1 and N-formylmethionyl-tRNA(fMet); mRNA recruitment can occur at any time during PIC assembly.

The protein localises to the cytoplasm. One of the essential components for the initiation of protein synthesis. Stabilizes the binding of IF-2 and IF-3 on the 30S subunit to which N-formylmethionyl-tRNA(fMet) subsequently binds. Helps modulate mRNA selection, yielding the 30S pre-initiation complex (PIC). Upon addition of the 50S ribosomal subunit IF-1, IF-2 and IF-3 are released leaving the mature 70S translation initiation complex. The protein is Translation initiation factor IF-1 of Bartonella tribocorum (strain CIP 105476 / IBS 506).